The following is a 445-amino-acid chain: C4-dicarboxylate transport protein (445 aa).

8 helical membrane passes run 24–44, 62–82, 105–125, 163–183, 201–221, 237–257, 322–342, and 370–390; these read VLYV…WVSP, LIKM…IAHI, FALI…GLAA, GDIL…MALG, FGVI…AMAF, LVAL…GLIA, IYMT…LTFT, and AGTL…VFSI.

This sequence belongs to the dicarboxylate/amino acid:cation symporter (DAACS) (TC 2.A.23) family.

It is found in the cell inner membrane. Functionally, responsible for the transport of dicarboxylates such as succinate, fumarate, and malate from the periplasm across the membrane. This Rhodopseudomonas palustris (strain BisB5) protein is C4-dicarboxylate transport protein.